Consider the following 464-residue polypeptide: Trigger factor (464 aa).

The 82-residue stretch at 162-243 (GDFVSIDLSA…VKSVKERELP (82 aa)) folds into the PPIase FKBP-type domain. The tract at residues 431-464 (IDTSEFFGKRPSGDGAADEDADQADESTTADAGE) is disordered. Residues 446–455 (AADEDADQAD) show a composition bias toward acidic residues.

Belongs to the FKBP-type PPIase family. Tig subfamily.

It is found in the cytoplasm. It catalyses the reaction [protein]-peptidylproline (omega=180) = [protein]-peptidylproline (omega=0). In terms of biological role, involved in protein export. Acts as a chaperone by maintaining the newly synthesized protein in an open conformation. Functions as a peptidyl-prolyl cis-trans isomerase. This is Trigger factor from Mycobacterium avium (strain 104).